The following is an 895-amino-acid chain: Probable methyltransferase PMT27 (895 aa).

Residues 1-16 are Cytoplasmic-facing; it reads MAFGRGRGNKRTSTSS. A helical; Signal-anchor for type II membrane protein membrane pass occupies residues 17 to 37; the sequence is YASTITMVIFVALCVFGVWML. Over 38 to 895 the chain is Lumenal; that stretch reads SSNSVIPPQI…KGFWRPETSQ (858 aa). Residues 43 to 52 show a composition bias toward polar residues; the sequence is IPPQITQGST. Positions 43 to 362 are disordered; that stretch reads IPPQITQGST…QRQTSESNTV (320 aa). A compositionally biased stretch (basic and acidic residues) spans 90–114; that stretch reads NPGKLPDDAVKSEDEQRKSAKEKSE. The span at 115–127 shows a compositional bias: low complexity; that stretch reads TTSSKTQTQETQQ. The span at 129 to 143 shows a compositional bias: basic and acidic residues; sequence NDDKISEEKEKDNGK. Asn-145 carries an N-linked (GlcNAc...) asparagine glycan. Positions 154-174 are enriched in basic and acidic residues; that stretch reads GQMKKVVKEFEKEQKQQRDED. Over residues 176 to 191 the composition is skewed to low complexity; the sequence is GTQPKGTQGQEQGQGK. Composition is skewed to polar residues over residues 199 to 232 and 243 to 256; these read GNKQ…GETS and PEEQ…TGQQ. Over residues 257 to 320 the composition is skewed to basic and acidic residues; sequence NEEKTTASEE…RKDEKKHEQG (64 aa). A compositionally biased stretch (polar residues) spans 337–346; the sequence is SQKSWKSQAT. Asn-375 and Asn-709 each carry an N-linked (GlcNAc...) asparagine glycan.

This sequence belongs to the methyltransferase superfamily.

The protein resides in the endoplasmic reticulum membrane. This Arabidopsis thaliana (Mouse-ear cress) protein is Probable methyltransferase PMT27.